The primary structure comprises 828 residues: Beta-galactosidase (828 aa).

The signal sequence occupies residues 1-20; that stretch reads MKMKQFNLLSLFLILITSFG. 2 N-linked (GlcNAc...) asparagine glycosylation sites follow: N23 and N153. The active-site Proton donor is the E183. Residue E252 is the Nucleophile of the active site. 7 N-linked (GlcNAc...) asparagine glycosylation sites follow: N253, N350, N379, N492, N667, N799, and N803. Residues 742 to 828 form the SUEL-type lectin domain; the sequence is AHEHNKVELS…PKRLFVEVEC (87 aa).

Belongs to the glycosyl hydrolase 35 family.

The protein resides in the secreted. It localises to the extracellular space. Its subcellular location is the apoplast. It catalyses the reaction Hydrolysis of terminal non-reducing beta-D-galactose residues in beta-D-galactosides.. The chain is Beta-galactosidase from Brassica oleracea (Wild cabbage).